We begin with the raw amino-acid sequence, 588 residues long: ATP-dependent lipid A-core flippase (588 aa).

The next 6 helical transmembrane spans lie at phenylalanine 23–glycine 43, phenylalanine 56–threonine 76, aspartate 141–methionine 161, valine 162–valine 182, leucine 257–isoleucine 277, and threonine 278–methionine 298. In terms of domain architecture, ABC transmembrane type-1 spans leucine 28–arginine 310. The ABC transporter domain maps to isoleucine 342 to valine 576. Glycine 375 to threonine 382 is an ATP binding site.

This sequence belongs to the ABC transporter superfamily. Lipid exporter (TC 3.A.1.106) family. Homodimer.

The protein resides in the cell inner membrane. It catalyses the reaction ATP + H2O + lipid A-core oligosaccharideSide 1 = ADP + phosphate + lipid A-core oligosaccharideSide 2.. Functionally, involved in lipopolysaccharide (LPS) biosynthesis. Translocates lipid A-core from the inner to the outer leaflet of the inner membrane. Transmembrane domains (TMD) form a pore in the inner membrane and the ATP-binding domain (NBD) is responsible for energy generation. The sequence is that of ATP-dependent lipid A-core flippase from Legionella pneumophila subsp. pneumophila (strain Philadelphia 1 / ATCC 33152 / DSM 7513).